A 737-amino-acid chain; its full sequence is Protein kinase C epsilon type (737 aa).

The C2 domain maps to 1-117 (MVVFNGLLKI…NGSRHFEDWI (117 aa)). Phosphoserine is present on Ser-62. The segment at 169 to 220 (GHKFMATYLRQPTYCSHCRDFIWGVIGKQGYQCQVCTCVVHKRCHELIITKC) adopts a Phorbol-ester/DAG-type 1 zinc-finger fold. The Interaction with actin motif lies at 223–228 (LKKQET). Thr-228 is modified (phosphothreonine). Residue Ser-234 is modified to Phosphoserine. The Phorbol-ester/DAG-type 2 zinc finger occupies 242-292 (PHKFGIHNYKVPTFCDHCGSLLWGLLRQGLQCKVCKMNVHRRCETNVAPNC). At Thr-309 the chain carries Phosphothreonine. The disordered stretch occupies residues 310–356 (PDKITNSGQRRKKLAAGAESPQPASGNSPSEDDRSKSAPTSPCDQEL). Ser-316, Ser-329, Ser-337, and Ser-346 each carry phosphoserine. Residue Thr-349 is modified to Phosphothreonine. Ser-350 carries the phosphoserine; by MAPK11 and MAPK14 modification. Residues Ser-368 and Ser-388 each carry the phosphoserine modification. The disordered stretch occupies residues 369-398 (FDNRGEEHRASSSTDGQLASPGENGEVRQG). A Protein kinase domain is found at 408-668 (FNFIKVLGKG…EDAIKQHPFF (261 aa)). Residues 414-422 (LGKGSFGKV) and Lys-437 each bind ATP. The active-site Proton acceptor is the Asp-532. Thr-566 is subject to Phosphothreonine; by PDPK1. The 69-residue stretch at 669-737 (KEIDWVLLEQ…FSYFGEDLMP (69 aa)) folds into the AGC-kinase C-terminal domain. Thr-703 and Thr-710 each carry phosphothreonine. Ser-729 is subject to Phosphoserine.

It belongs to the protein kinase superfamily. AGC Ser/Thr protein kinase family. PKC subfamily. As to quaternary structure, forms a ternary complex with TRIM63 and RACK1/GN2BL1. Can form a complex with PDLIM5 and N-type calcium channel. Interacts with COPB1. Interacts with DGKQ. Interacts with STAT3. Interacts with YWHAB. Interacts with HSP90AB1; promotes functional activation in a heat shock-dependent manner. Interacts (via phorbol-ester/DAG-type 2 domain) with PRPH and VIM. Interacts with NLRP5/MATER. In terms of processing, phosphorylation on Thr-566 by PDPK1 triggers autophosphorylation on Ser-729. Phosphorylation in the hinge domain at Ser-350 by MAPK11 or MAPK14, Ser-346 by GSK3B and Ser-368 by autophosphorylation is required for interaction with YWHAB. In response to growth factors, phosphorylated at Thr-703 and Ser-729 by the mTORC2 complex, promoting autophosphorylation and activation of PRKCE.

The protein resides in the cytoplasm. It localises to the cytoskeleton. Its subcellular location is the cell membrane. The protein localises to the perinuclear region. It is found in the nucleus. The catalysed reaction is L-seryl-[protein] + ATP = O-phospho-L-seryl-[protein] + ADP + H(+). It catalyses the reaction L-threonyl-[protein] + ATP = O-phospho-L-threonyl-[protein] + ADP + H(+). Novel PKCs (PRKCD, PRKCE, PRKCH and PRKCQ) are calcium-insensitive, but activated by diacylglycerol (DAG) and phosphatidylserine. Three specific sites; Thr-566 (activation loop of the kinase domain), Thr-710 (turn motif) and Ser-729 (hydrophobic region), need to be phosphorylated for its full activation. Calcium-independent, phospholipid- and diacylglycerol (DAG)-dependent serine/threonine-protein kinase that plays essential roles in the regulation of multiple cellular processes linked to cytoskeletal proteins, such as cell adhesion, motility, migration and cell cycle, functions in neuron growth and ion channel regulation, and is involved in immune response, cancer cell invasion and regulation of apoptosis. Mediates cell adhesion to the extracellular matrix via integrin-dependent signaling, by mediating angiotensin-2-induced activation of integrin beta-1 (ITGB1) in cardiac fibroblasts. Phosphorylates MARCKS, which phosphorylates and activates PTK2/FAK, leading to the spread of cardiomyocytes. Involved in the control of the directional transport of ITGB1 in mesenchymal cells by phosphorylating vimentin (VIM), an intermediate filament (IF) protein. In epithelial cells, associates with and phosphorylates keratin-8 (KRT8), which induces targeting of desmoplakin at desmosomes and regulates cell-cell contact. Phosphorylates IQGAP1, which binds to CDC42, mediating epithelial cell-cell detachment prior to migration. During cytokinesis, forms a complex with YWHAB, which is crucial for daughter cell separation, and facilitates abscission by a mechanism which may implicate the regulation of RHOA. In cardiac myocytes, regulates myofilament function and excitation coupling at the Z-lines, where it is indirectly associated with F-actin via interaction with COPB1. During endothelin-induced cardiomyocyte hypertrophy, mediates activation of PTK2/FAK, which is critical for cardiomyocyte survival and regulation of sarcomere length. Plays a role in the pathogenesis of dilated cardiomyopathy via persistent phosphorylation of troponin I (TNNI3). Involved in nerve growth factor (NFG)-induced neurite outgrowth and neuron morphological change independently of its kinase activity, by inhibition of RHOA pathway, activation of CDC42 and cytoskeletal rearrangement. May be involved in presynaptic facilitation by mediating phorbol ester-induced synaptic potentiation. Phosphorylates gamma-aminobutyric acid receptor subunit gamma-2 (GABRG2), which reduces the response of GABA receptors to ethanol and benzodiazepines and may mediate acute tolerance to the intoxicating effects of ethanol. Upon PMA treatment, phosphorylates the capsaicin- and heat-activated cation channel TRPV1, which is required for bradykinin-induced sensitization of the heat response in nociceptive neurons. Is able to form a complex with PDLIM5 and N-type calcium channel, and may enhance channel activities and potentiates fast synaptic transmission by phosphorylating the pore-forming alpha subunit CACNA1B (CaV2.2). Downstream of TLR4, plays an important role in the lipopolysaccharide (LPS)-induced immune response by phosphorylating and activating TICAM2/TRAM, which in turn activates the transcription factor IRF3 and subsequent cytokines production. In differentiating erythroid progenitors, is regulated by EPO and controls the protection against the TNFSF10/TRAIL-mediated apoptosis, via BCL2. May be involved in the regulation of the insulin-induced phosphorylation and activation of AKT1. Phosphorylates NLRP5/MATER and may thereby modulate AKT pathway activation in cumulus cells. Phosphorylates and activates LRRK1, which phosphorylates RAB proteins involved in intracellular trafficking. This Rattus norvegicus (Rat) protein is Protein kinase C epsilon type (Prkce).